A 504-amino-acid polypeptide reads, in one-letter code: 26S proteasome non-ATPase regulatory subunit 5 (504 aa).

Residue Ala2 is modified to N-acetylalanine.

The protein belongs to the proteasome subunit S5B/HSM3 family. Interacts with PSMC1, PSMC2, PSMD1 and PSMD6. Part of transient complex containing PSMD5, PSMC2, PSMC1 and PSMD2 formed during the assembly of the 26S proteasome.

In terms of biological role, acts as a chaperone during the assembly of the 26S proteasome, specifically of the base subcomplex of the PA700/19S regulatory complex (RC). In the initial step of the base subcomplex assembly is part of an intermediate PSMD5:PSMC2:PSMC1:PSMD2 module which probably assembles with a PSMD10:PSMC4:PSMC5:PAAF1 module followed by dissociation of PSMD5. The polypeptide is 26S proteasome non-ATPase regulatory subunit 5 (Psmd5) (Mus musculus (Mouse)).